We begin with the raw amino-acid sequence, 1310 residues long: Angiotensin-converting enzyme (1310 aa).

The signal sequence occupies residues 1 to 33 (MGAAPGRRGPRLLRPPPPLLLLLLLLRPPPAAL). Residues 34-1260 (TLDPGLLPGD…GMNLDAQQAR (1227 aa)) are Extracellular-facing. Peptidase M2 domains follow at residues 45–628 (AADE…LGWP) and 647–1226 (VTDE…LGWP). 3 N-linked (GlcNAc...) asparagine glycosylation sites follow: N59, N79, and N151. C162 and C170 are disulfide-bonded. A chloride-binding site is contributed by Y236. A glycan (N-linked (GlcNAc...) asparagine) is linked at N323. C364 and C382 are joined by a disulfide. A Zn(2+)-binding site is contributed by H395. The Proton acceptor 1 role is filled by E396. The Zn(2+) site is built by H399 and E422. 2 N-linked (GlcNAc...) asparagine glycosylation sites follow: N449 and N513. The active-site Proton donor 1 is the H524. Residue R533 coordinates chloride. The cysteines at positions 549 and 561 are disulfide-linked. Residues N681, N699, and N718 are each glycosylated (N-linked (GlcNAc...) asparagine). C761 and C767 form a disulfide bridge. Chloride contacts are provided by R795 and Y833. Residue N946 is glycosylated (N-linked (GlcNAc...) asparagine). Residues C961 and C979 are joined by a disulfide bond. H992 contributes to the Zn(2+) binding site. E993 serves as the catalytic Proton acceptor 2. The Zn(2+) site is built by H996 and E1020. The chloride site is built by W1094 and R1098. H1122 acts as the Proton donor 2 in catalysis. R1131 is a chloride binding site. An intrachain disulfide couples C1147 to C1159. N1195 carries N-linked (GlcNAc...) asparagine glycosylation. Residues 1219-1260 (HGEKLGWPQYTWTPNSARSEGSLPDSGRVNFLGMNLDAQQAR) form a juxtamembrane stalk region. The helical transmembrane segment at 1261-1281 (VGQWVLLFLGVALLLASLGLT) threads the bilayer. Residues 1282-1310 (QRLFSIRYQSLRQPHHGPQFGSEVELRHS) are Cytoplasmic-facing. S1303 bears the Phosphoserine mark.

The protein belongs to the peptidase M2 family. In terms of assembly, monomer and homodimer; homodimerizes following binding to an inhibitor. Interacts with calmodulin (CALM1, CALM2 or CALM3); interaction takes place in the cytoplasmic region and regulates phosphorylation and proteolytic cleavage. Zn(2+) serves as cofactor. Requires chloride as cofactor. N-glycosylated. In terms of processing, phosphorylated by CK2 on Ser-1303; which allows membrane retention. Phosphorylated on tyrosine residues on its extracellular part, promoting cleavage by secretase enzymes and formation of the soluble form (Angiotensin-converting enzyme, soluble form). Post-translationally, produced following proteolytic cleavage by secretase enzymes that cleave the transmembrane form in the juxtamembrane stalk region upstream of the transmembrane region. Cleavage can take place at different sites of the juxtamembrane stalk region. As to expression, testis-specific isoform is expressed in spermatocytes, adult testis.

It is found in the cell membrane. It localises to the cytoplasm. Its subcellular location is the secreted. The enzyme catalyses Release of a C-terminal dipeptide, oligopeptide-|-Xaa-Yaa, when Xaa is not Pro, and Yaa is neither Asp nor Glu. Thus, conversion of angiotensin I to angiotensin II, with increase in vasoconstrictor activity, but no action on angiotensin II.. It carries out the reaction angiotensin I + H2O = L-histidyl-L-leucine + angiotensin II. The catalysed reaction is bradykinin + H2O = L-Phe-L-Arg + bradykinin(1-7). It catalyses the reaction substance P + H2O = substance P(1-9) + L-Leu-L-Met-NH2. The enzyme catalyses substance P + H2O = substance P(1-8) + Gly-L-Leu-L-Met-NH2. It carries out the reaction substance P + H2O = L-Phe-L-Phe-Gly-L-Leu-L-Met-NH2 + substance P(1-6). The catalysed reaction is neurotensin + H2O = neurotensin(1-11) + L-isoleucyl-L-leucine. It catalyses the reaction goralatide + H2O = N-acetyl-L-seryl-L-aspartate + L-lysyl-L-proline. The enzyme catalyses Met-enkephalin + H2O = L-phenylalanyl-L-methionine + L-tyrosylglycylglycine. It carries out the reaction Leu-enkephalin + H2O = L-tyrosylglycylglycine + L-phenylalanyl-L-leucine. The catalysed reaction is Met-enkephalin-Arg-Phe + H2O = L-arginyl-L-phenylalanine + Met-enkephalin. With respect to regulation, the dipeptidyl carboxypeptidase activity is strongly activated by chloride. Specifically inhibited by lisinopril. Inhibited by mixanpril, an orally-active drug used for the treatment of hypertension. Its activity is regulated as follows. Strongly inhibited by lisinopril and captopril. Dipeptidyl carboxypeptidase that removes dipeptides from the C-terminus of a variety of circulating hormones, such as angiotensin I, bradykinin or enkephalins, thereby playing a key role in the regulation of blood pressure, electrolyte homeostasis or synaptic plasticity. Composed of two similar catalytic domains, each possessing a functional active site, with different selectivity for substrates. Plays a major role in the angiotensin-renin system that regulates blood pressure and sodium retention by the kidney by converting angiotensin I to angiotensin II, resulting in an increase of the vasoconstrictor activity of angiotensin. Also able to inactivate bradykinin, a potent vasodilator, and therefore enhance the blood pressure response. Acts as a regulator of synaptic transmission by mediating cleavage of neuropeptide hormones, such as substance P, neurotensin or enkephalins. Catalyzes degradation of different enkephalin neuropeptides (Met-enkephalin, Leu-enkephalin, Met-enkephalin-Arg-Phe and possibly Met-enkephalin-Arg-Gly-Leu). Acts as a regulator of synaptic plasticity in the nucleus accumbens of the brain by mediating cleavage of Met-enkephalin-Arg-Phe, a strong ligand of Mu-type opioid receptor OPRM1, into Met-enkephalin. Met-enkephalin-Arg-Phe cleavage by ACE decreases activation of OPRM1, leading to long-term synaptic potentiation of glutamate release. Also acts as a regulator of hematopoietic stem cell differentiation by mediating degradation of hemoregulatory peptide N-acetyl-SDKP (AcSDKP). Acts as a regulator of cannabinoid signaling pathway by mediating degradation of hemopressin, an antagonist peptide of the cannabinoid receptor CNR1. Involved in amyloid-beta metabolism by catalyzing degradation of Amyloid-beta protein 40 and Amyloid-beta protein 42 peptides, thereby preventing plaque formation. Catalyzes cleavage of cholecystokinin (maturation of Cholecystokinin-8 and Cholecystokinin-5) and Gonadoliberin-1 (both maturation and degradation) hormones. Degradation of hemoregulatory peptide N-acetyl-SDKP (AcSDKP) and amyloid-beta proteins is mediated by the N-terminal catalytic domain, while angiotensin I and cholecystokinin cleavage is mediated by the C-terminal catalytic region. Functionally, soluble form that is released in blood plasma and other body fluids following proteolytic cleavage in the juxtamembrane stalk region. Its function is as follows. Isoform produced by alternative promoter usage that is specifically expressed in spermatocytes and adult testis, and which is required for male fertility. In contrast to somatic isoforms, only contains one catalytic domain. Acts as a dipeptidyl carboxypeptidase that removes dipeptides from the C-terminus of substrates. The identity of substrates that are needed for male fertility is unknown. May also have a glycosidase activity which releases GPI-anchored proteins from the membrane by cleaving the mannose linkage in the GPI moiety. The GPIase activity was reported to be essential for the egg-binding ability of the sperm. This activity is however unclear and has been challenged by other groups, suggesting that it may be indirect. The chain is Angiotensin-converting enzyme from Oryctolagus cuniculus (Rabbit).